A 413-amino-acid polypeptide reads, in one-letter code: 5'-deoxyadenosine deaminase (413 aa).

Positions 57 and 59 each coordinate Zn(2+). 2 residues coordinate substrate: Glu86 and His171. His198 provides a ligand contact to Zn(2+). 2 residues coordinate substrate: Glu201 and Asp286. Asp286 serves as a coordination point for Zn(2+).

The protein belongs to the metallo-dependent hydrolases superfamily. MTA/SAH deaminase family. As to quaternary structure, homotetramer. The cofactor is Zn(2+).

It catalyses the reaction 5'-deoxyadenosine + H2O + H(+) = 5'-deoxyinosine + NH4(+). The enzyme catalyses S-adenosyl-L-homocysteine + H2O + H(+) = S-inosyl-L-homocysteine + NH4(+). The catalysed reaction is S-methyl-5'-thioadenosine + H2O + H(+) = S-methyl-5'-thioinosine + NH4(+). It carries out the reaction adenosine + H2O + H(+) = inosine + NH4(+). It functions in the pathway amino-acid biosynthesis; S-adenosyl-L-methionine biosynthesis. Catalyzes the deamination of three SAM-derived enzymatic products, namely 5'-deoxyadenosine, S-adenosyl-L-homocysteine, and 5'-methylthioadenosine, to produce the inosine analogs. Can also deaminate adenosine. The preferred substrate for this enzyme is 5'-deoxyadenosine, but all these substrates are efficiently deaminated. Likely functions in a S-adenosyl-L-methionine (SAM) recycling pathway from S-adenosyl-L-homocysteine (SAH) produced from SAM-dependent methylation reactions. May also be involved in the recycling of 5'-deoxyadenosine, whereupon the 5'-deoxyribose moiety of 5'-deoxyinosine is further metabolized to deoxyhexoses used for the biosynthesis of aromatic amino acids in methanogens. The protein is 5'-deoxyadenosine deaminase of Methanothrix thermoacetophila (strain DSM 6194 / JCM 14653 / NBRC 101360 / PT) (Methanosaeta thermophila).